Here is a 71-residue protein sequence, read N- to C-terminus: Conotoxin Bu23 (71 aa).

The signal sequence occupies residues 1–21 (MGMRMMVTVFLLGVLATTVVS). The propeptide occupies 22-37 (LRSNRASDGRRGIVNK). Asparagine amide is present on asparagine 70.

This sequence belongs to the conotoxin A superfamily. Contains 3 disulfide bonds. They are not indicated here, since framework IV presents two different connectivities (I-V, II-III, IV-VI and I-III, II-V, IV-VI). In terms of tissue distribution, expressed by the venom duct.

The protein resides in the secreted. The sequence is that of Conotoxin Bu23 from Conus bullatus (Bubble cone).